We begin with the raw amino-acid sequence, 378 residues long: Peptide methionine sulfoxide reductase MsrA/MsrB (378 aa).

A peptide methionine sulfoxide reductase A region spans residues 40–197 (QQATLAGGCF…KVRYNYYRYA (158 aa)). C48 is an active-site residue. Residues 240–362 (DEQIRAKLTS…NSAAMRFIPK (123 aa)) enclose the MsrB domain. C351 functions as the Nucleophile in the catalytic mechanism.

This sequence in the N-terminal section; belongs to the MsrA Met sulfoxide reductase family. The protein in the C-terminal section; belongs to the MsrB Met sulfoxide reductase family.

It catalyses the reaction L-methionyl-[protein] + [thioredoxin]-disulfide + H2O = L-methionyl-(S)-S-oxide-[protein] + [thioredoxin]-dithiol. It carries out the reaction [thioredoxin]-disulfide + L-methionine + H2O = L-methionine (S)-S-oxide + [thioredoxin]-dithiol. The catalysed reaction is L-methionyl-[protein] + [thioredoxin]-disulfide + H2O = L-methionyl-(R)-S-oxide-[protein] + [thioredoxin]-dithiol. In terms of biological role, has an important function as a repair enzyme for proteins that have been inactivated by oxidation. Catalyzes the reversible oxidation-reduction of methionine sulfoxide in proteins to methionine. In Vibrio cholerae serotype O1 (strain ATCC 39315 / El Tor Inaba N16961), this protein is Peptide methionine sulfoxide reductase MsrA/MsrB (msrAB).